Reading from the N-terminus, the 536-residue chain is Putative beta-xylosidase (536 aa).

Asp-14 (proton acceptor) is an active-site residue. Residue Glu-186 is the Proton donor of the active site.

The protein belongs to the glycosyl hydrolase 43 family.

The catalysed reaction is Hydrolysis of (1-&gt;4)-beta-D-xylans, to remove successive D-xylose residues from the non-reducing termini.. The protein is Putative beta-xylosidase (yagH) of Escherichia coli (strain K12).